The sequence spans 192 residues: Inner membrane protein YohD (192 aa).

At 1 to 40 the chain is on the periplasmic side; that stretch reads MDLNTLISQYGYAALVIGSLAEGETVTLLGGVAAHQGLLK. The helical transmembrane segment at 41–61 threads the bilayer; it reads FPLVVLSVALGGMIGDQVLYL. The Cytoplasmic segment spans residues 62–121; sequence CGRRFGGKLLRRFSKHQDKIERAQKLIQRHPYLFVIGTRFMYGFRVIGPTLIGASQLPPK. The chain crosses the membrane as a helical span at residues 122 to 142; the sequence is IFLPLNILGAFAWALIFTTIG. Residues 143–159 are Periplasmic-facing; the sequence is YAGGQVIAPWLHNLDQH. Residues 160-180 traverse the membrane as a helical segment; the sequence is LKHWVWLILVVVLVVGVRWWL. The Cytoplasmic segment spans residues 181–192; sequence KRRGKKKPDHQA.

The protein belongs to the DedA family.

The protein localises to the cell inner membrane. This chain is Inner membrane protein YohD (yohD), found in Escherichia coli (strain K12).